The chain runs to 224 residues: Urease accessory protein UreF (224 aa).

This sequence belongs to the UreF family. In terms of assembly, ureD, UreF and UreG form a complex that acts as a GTP-hydrolysis-dependent molecular chaperone, activating the urease apoprotein by helping to assemble the nickel containing metallocenter of UreC. The UreE protein probably delivers the nickel.

The protein resides in the cytoplasm. Its function is as follows. Required for maturation of urease via the functional incorporation of the urease nickel metallocenter. The protein is Urease accessory protein UreF of Azotobacter vinelandii (strain DJ / ATCC BAA-1303).